A 670-amino-acid polypeptide reads, in one-letter code: DNA ligase (670 aa).

NAD(+)-binding positions include 33 to 37 (DVEYD), 82 to 83 (SL), and E114. The N6-AMP-lysine intermediate role is filled by K116. NAD(+) is bound by residues R137, E174, K291, and K315. Positions 409, 412, 427, and 433 each coordinate Zn(2+). The region spanning 593–670 (DQELPLEGKV…TEEDLIALIS (78 aa)) is the BRCT domain.

It belongs to the NAD-dependent DNA ligase family. LigA subfamily. The cofactor is Mg(2+). Mn(2+) is required as a cofactor.

It carries out the reaction NAD(+) + (deoxyribonucleotide)n-3'-hydroxyl + 5'-phospho-(deoxyribonucleotide)m = (deoxyribonucleotide)n+m + AMP + beta-nicotinamide D-nucleotide.. Functionally, DNA ligase that catalyzes the formation of phosphodiester linkages between 5'-phosphoryl and 3'-hydroxyl groups in double-stranded DNA using NAD as a coenzyme and as the energy source for the reaction. It is essential for DNA replication and repair of damaged DNA. This Vibrio atlanticus (strain LGP32) (Vibrio splendidus (strain Mel32)) protein is DNA ligase.